Reading from the N-terminus, the 424-residue chain is Phosphomethylpyrimidine synthase (424 aa).

Residues N66, M95, Y124, H163, 185–187 (SRG), 226–229 (DGMR), and E265 each bind substrate. Residue H269 coordinates Zn(2+). F292 is a substrate binding site. H333 lines the Zn(2+) pocket. Residues C408, C411, and C415 each contribute to the [4Fe-4S] cluster site.

The protein belongs to the ThiC family. The cofactor is [4Fe-4S] cluster.

It carries out the reaction 5-amino-1-(5-phospho-beta-D-ribosyl)imidazole + S-adenosyl-L-methionine = 4-amino-2-methyl-5-(phosphooxymethyl)pyrimidine + CO + 5'-deoxyadenosine + formate + L-methionine + 3 H(+). It participates in cofactor biosynthesis; thiamine diphosphate biosynthesis. In terms of biological role, catalyzes the synthesis of the hydroxymethylpyrimidine phosphate (HMP-P) moiety of thiamine from aminoimidazole ribotide (AIR) in a radical S-adenosyl-L-methionine (SAM)-dependent reaction. This is Phosphomethylpyrimidine synthase from Thermotoga neapolitana (strain ATCC 49049 / DSM 4359 / NBRC 107923 / NS-E).